The sequence spans 334 residues: GTPase Obg (334 aa).

Residues 1-159 (MRFVDEVVIK…KEVRLELNLL (159 aa)) enclose the Obg domain. The 172-residue stretch at 160–331 (ADVALLGLPN…LAKKLNEFLQ (172 aa)) folds into the OBG-type G domain. Residues 166 to 173 (GLPNAGKS), 191 to 195 (FTTMY), 212 to 215 (DIPG), 282 to 285 (NKID), and 312 to 314 (SAA) each bind GTP. 2 residues coordinate Mg(2+): S173 and T193.

It belongs to the TRAFAC class OBG-HflX-like GTPase superfamily. OBG GTPase family. In terms of assembly, monomer. Mg(2+) serves as cofactor.

It localises to the cytoplasm. Functionally, an essential GTPase which binds GTP, GDP and possibly (p)ppGpp with moderate affinity, with high nucleotide exchange rates and a fairly low GTP hydrolysis rate. Plays a role in control of the cell cycle, stress response, ribosome biogenesis and in those bacteria that undergo differentiation, in morphogenesis control. In Francisella tularensis subsp. mediasiatica (strain FSC147), this protein is GTPase Obg.